The following is a 234-amino-acid chain: HTH-type transcriptional regulator MT1864 (234 aa).

An HTH tetR-type domain is found at 15 to 75 (EQIEAKIVEL…LLLVDAYSDL (61 aa)). Residues 38–57 (SLRAIARNLGMVSSAVYRYV) constitute a DNA-binding region (H-T-H motif).

In terms of assembly, homodimer.

It is found in the cytoplasm. In terms of biological role, may participate in the regulatory network that controls the expression of MmpL lipid transporters. This is HTH-type transcriptional regulator MT1864 from Mycobacterium tuberculosis (strain CDC 1551 / Oshkosh).